The chain runs to 334 residues: GTP 3',8-cyclase (334 aa).

A Radical SAM core domain is found at 13-239 (RFHRKFYYLR…KVKAVNDGPA (227 aa)). R22 contacts GTP. The [4Fe-4S] cluster site is built by C29 and C33. Y35 provides a ligand contact to S-adenosyl-L-methionine. [4Fe-4S] cluster is bound at residue C36. R73 provides a ligand contact to GTP. G77 contacts S-adenosyl-L-methionine. T104 contacts GTP. S-adenosyl-L-methionine is bound at residue S128. A GTP-binding site is contributed by K165. M199 is a binding site for S-adenosyl-L-methionine. Positions 262 and 265 each coordinate [4Fe-4S] cluster. A GTP-binding site is contributed by 267–269 (RLR). C279 contacts [4Fe-4S] cluster.

The protein belongs to the radical SAM superfamily. MoaA family. In terms of assembly, monomer and homodimer. [4Fe-4S] cluster is required as a cofactor.

It carries out the reaction GTP + AH2 + S-adenosyl-L-methionine = (8S)-3',8-cyclo-7,8-dihydroguanosine 5'-triphosphate + 5'-deoxyadenosine + L-methionine + A + H(+). It participates in cofactor biosynthesis; molybdopterin biosynthesis. Its function is as follows. Catalyzes the cyclization of GTP to (8S)-3',8-cyclo-7,8-dihydroguanosine 5'-triphosphate. This Vibrio atlanticus (strain LGP32) (Vibrio splendidus (strain Mel32)) protein is GTP 3',8-cyclase.